The chain runs to 745 residues: Elongation factor G, mitochondrial (745 aa).

The region spanning 40–317 is the tr-type G domain; that stretch reads ERIRNIGISA…AVLDYLPNPG (278 aa). GTP-binding positions include 49–56, 116–120, and 170–173; these read AHIDSGKT, DTPGH, and NKLD.

This sequence belongs to the TRAFAC class translation factor GTPase superfamily. Classic translation factor GTPase family. EF-G/EF-2 subfamily.

It is found in the mitochondrion. It functions in the pathway protein biosynthesis; polypeptide chain elongation. In terms of biological role, mitochondrial GTPase that catalyzes the GTP-dependent ribosomal translocation step during translation elongation. During this step, the ribosome changes from the pre-translocational (PRE) to the post-translocational (POST) state as the newly formed A-site-bound peptidyl-tRNA and P-site-bound deacylated tRNA move to the P and E sites, respectively. Catalyzes the coordinated movement of the two tRNA molecules, the mRNA and conformational changes in the ribosome. Essential during development as it acts as a retrograde signal from mitochondria to the nucleus to slow down cell proliferation if mitochondrial energy output is low. The protein is Elongation factor G, mitochondrial of Drosophila erecta (Fruit fly).